We begin with the raw amino-acid sequence, 342 residues long: Ribosomal RNA small subunit methyltransferase C (342 aa).

Belongs to the methyltransferase superfamily. RsmC family. In terms of assembly, monomer.

The protein localises to the cytoplasm. The catalysed reaction is guanosine(1207) in 16S rRNA + S-adenosyl-L-methionine = N(2)-methylguanosine(1207) in 16S rRNA + S-adenosyl-L-homocysteine + H(+). Specifically methylates the guanine in position 1207 of 16S rRNA in the 30S particle. This chain is Ribosomal RNA small subunit methyltransferase C, found in Shewanella piezotolerans (strain WP3 / JCM 13877).